The following is a 902-amino-acid chain: MVSPDNRPGTQGPSASAHAHDSRVPRKRPGSWDNNPSTAGNRAVKKRAVRACVSCRDRKVRCDVVNGGPPCTNCRLDDVDCVLKASNRGKHNPARYQARSRLSSNATAPRAPSPSDNINTDADTAAPGPAPGSASATVFRSDHSHGSVATGQPQERRGSQSVAHGDEETICDDDENENNSWHNQQEAEQTRIIHDSQVQPNDIVHETHCEQQPQPQPSQGAATRSTPSAQPANPQTSDYLVALAFQGFYALGWTEQDATEAPPSSSRMDNVSASANTPHADQNHLPLYISPHPSHLDKHDLEFLARKDCLTIPDNQLRDELIRIYVFVVYPFMPAIDLVDFLEPITGSSEVGTVSLLLFQAIMFASVTFIDMQLLQRYGFKNKRAARQVFFNRVKLLYSLGYEADRLTLVQSLLLMTYWYDSDSDEKHTWYWMGLALTTAHIEGLQRDLEEPQQMTKNGRLRRRIWWSCVIRDRLLGLGLRRPSRIQEDEFSVERLRLDDFDISLPPPPAVARLLAAPSYTGKDPVNRQRMANLCIDLSQLCFTIGRILHTQYTIASTPGAGSNYLRRAIVRPRSLKEQAHSFAKCDADLQEWFRSLAPESRYVPGARDGGAAAAQVENSTIRLHKILLYMKYLTAIGALHRPQVFYSGSDSIDPARKADSRRKLTEAAVAITKLAFDLQSNGQMCYAPTSSVPAFLSAALIHLLNIRSPDEETRNISIGRFCQCLDALHQLQSMYTAADEAVHIINNMTENAGFILPLLGIGNPMSKANGIAARNSRLFSAIGPSRVTTAYPSPAPATGNLDTSQEEMISAPIPGAGPTGVALTGQRSRQPSAGPNMTPSATPNLMSIWSAAGNIHSERDLPLPADLMAGIQLDLDAWYNIGDIIDPALMNFETGLDFLNS.

The interval 1 to 47 (MVSPDNRPGTQGPSASAHAHDSRVPRKRPGSWDNNPSTAGNRAVKKR) is disordered. A DNA-binding region (zn(2)-C6 fungal-type) is located at residues 52–81 (CVSCRDRKVRCDVVNGGPPCTNCRLDDVDC). Disordered stretches follow at residues 92 to 189 (NPAR…EAEQ), 208 to 234 (HCEQ…PANP), 258 to 277 (ATEA…SANT), and 820 to 839 (TGVA…PNMT). Positions 120–137 (TDADTAAPGPAPGSASAT) are enriched in low complexity. A compositionally biased stretch (acidic residues) spans 168–177 (ETICDDDENE). Polar residues-rich tracts occupy residues 178 to 187 (NNSWHNQQEA), 220 to 234 (GAAT…PANP), 262 to 277 (PPSS…SANT), and 826 to 839 (GQRS…PNMT).

Its subcellular location is the nucleus. Transcription factor; part of the Fusarium detoxification of benzoxazolinone cluster involved in the degradation of benzoxazolinones produced by the host plant. Maize, wheat, and rye produce the 2 benzoxazinone phytoanticipins 2,4-dihy-droxy-7-methoxy-1,4-benzoxazin-3-one (DIMBOA) and 2,4-dihydroxy-1,4-benzoxazin-3-one (DIBOA) that, due to their inherent instability once released, spontaneously degrade to the more stable corresponding benzoxazolinones, 6-methoxy-2-benzoxazolinone (MBOA) and 2-benzoxazolinone (BOA), respectively. FPSE_08121 positively regulates the expression of the FBD cluster gene FPSE_08120 in response to 2-aminophenol (2-AP) treatment and contributes quantitatively to benzoxazolinone tolerance. The sequence is that of Transcription factor FPSE_08121 from Fusarium pseudograminearum (strain CS3096) (Wheat and barley crown-rot fungus).